Consider the following 198-residue polypeptide: Molybdopterin synthase catalytic subunit (198 aa).

Substrate contacts are provided by residues 107-108 (HR), lysine 123, and 130-132 (KKE).

This sequence belongs to the MoaE family. MOCS2B subfamily. As to quaternary structure, heterotetramer; composed of 2 small (MOCS2A) and 2 large (MOCS2B) subunits.

Its subcellular location is the cytoplasm. It catalyses the reaction 2 [molybdopterin-synthase sulfur-carrier protein]-C-terminal-Gly-aminoethanethioate + cyclic pyranopterin phosphate + H2O = molybdopterin + 2 [molybdopterin-synthase sulfur-carrier protein]-C-terminal Gly-Gly + 2 H(+). The protein operates within cofactor biosynthesis; molybdopterin biosynthesis. Functionally, catalytic subunit of the molybdopterin synthase complex, a complex that catalyzes the conversion of precursor Z into molybdopterin. Acts by mediating the incorporation of 2 sulfur atoms from thiocarboxylated MOCS2A into precursor Z to generate a dithiolene group. The sequence is that of Molybdopterin synthase catalytic subunit from Arabidopsis thaliana (Mouse-ear cress).